Consider the following 330-residue polypeptide: Homeobox protein Hox-C13 (330 aa).

Positions 30–47 (GGGGGGGGGTGGAGGGCS) are enriched in gly residues. The segment at 30 to 50 (GGGGGGGGGTGGAGGGCSGAS) is disordered. Residues 260–319 (GRKKRVPYTKVQLKELEKEYAASKFITKEKRRRISATTNLSERQVTIWFQNRRVKEKKVV) constitute a DNA-binding region (homeobox).

Belongs to the Abd-B homeobox family.

The protein resides in the nucleus. In terms of biological role, transcription factor which plays a role in hair follicle differentiation. Regulates FOXQ1 expression and that of other hair-specific genes. The protein is Homeobox protein Hox-C13 (HOXC13) of Homo sapiens (Human).